The sequence spans 389 residues: Ethanolamine-phosphate cytidylyltransferase (389 aa).

The segment at 1–20 is disordered; the sequence is MIRNGRGAAGGAEQPGPGGR. Residues 221 to 222, 229 to 232, Lys-259, 307 to 310, and 336 to 340 contribute to the CTP site; these read AF, HVDF, HGKT, and SGSNL. Ser-338 bears the Phosphoserine mark. Phosphothreonine is present on residues Thr-341 and Thr-342.

The protein belongs to the cytidylyltransferase family. Strongest expression in liver, heart, and skeletal muscle.

It catalyses the reaction phosphoethanolamine + CTP + H(+) = CDP-ethanolamine + diphosphate. It functions in the pathway phospholipid metabolism; phosphatidylethanolamine biosynthesis; phosphatidylethanolamine from ethanolamine: step 2/3. Its function is as follows. Ethanolamine-phosphate cytidylyltransferase that catalyzes the second step in the synthesis of phosphatidylethanolamine (PE) from ethanolamine via the CDP-ethanolamine pathway. Phosphatidylethanolamine is a dominant inner-leaflet phospholipid in cell membranes, where it plays a role in membrane function by structurally stabilizing membrane-anchored proteins, and participates in important cellular processes such as cell division, cell fusion, blood coagulation, and apoptosis. This chain is Ethanolamine-phosphate cytidylyltransferase (PCYT2), found in Homo sapiens (Human).